Here is a 356-residue protein sequence, read N- to C-terminus: Protein SEC13 homolog (356 aa).

WD repeat units follow at residues 11–50 (EHED…KALA), 54–95 (GHQG…DWTK), 101–142 (NHDS…GVWD), 149–205 (AHTI…WVEE), 210–253 (AHSD…SEWT), and 259–298 (TFDD…QWIR). The disordered stretch occupies residues 307–356 (IQSKQPSHLPHSHSQQQQALQQHQQQAPSHPGPSSDSEHSSNLSNSQLSN). A compositionally biased stretch (low complexity) spans 308-356 (QSKQPSHLPHSHSQQQQALQQHQQQAPSHPGPSSDSEHSSNLSNSQLSN).

Belongs to the WD repeat SEC13 family. Probable component of the nuclear pore complex (NPC). Component of the GATOR complex consisting of mio, Nup44A/Seh1, Im11, Nplr3, Nplr2, Wdr24, Wdr59 and Sec13. Within the GATOR complex, probable component of the GATOR2 subcomplex which is likely composed of mio, Nup44A/Seh1, Wdr24, Wdr59 and Sec13. Interacts with msk. Interacts (preferentially when phosphorylated) with Mad. The GATOR2 complex associates with unmet in the absence of S-adenosyl-L-methionine; the mio-Wdr24-Nup44A subcomplex is essential and sufficient for this interaction while Wdr59 and Sec13 are dispensable. This association acts as a nutrient sensor to inhibit mTORC1 signaling in the absence of methionine. Salivary glands.

The protein resides in the nucleus envelope. Its subcellular location is the nucleus. It is found in the nucleoplasm. The protein localises to the cytoplasm. It localises to the cytoskeleton. The protein resides in the microtubule organizing center. Its subcellular location is the centrosome. It is found in the nuclear pore complex. The protein localises to the cytoplasmic vesicle. It localises to the COPII-coated vesicle membrane. The protein resides in the endoplasmic reticulum membrane. Its subcellular location is the lysosome membrane. In terms of biological role, functions as a component of the nuclear pore complex (NPC) and the COPII coat. At the endoplasmic reticulum, SEC13 is involved in the biogenesis of COPII-coated vesicles. Recruited to transcriptionally active chromatin at the time of transcription initiation by RNA polymerase II. Required for proper expression of ecdysone-responsive genes such as Eip74EF and Eip75B during larval development. Required for reactivation of transcription after heat shock. Required for nuclear import of phosphorylated Mad via importin msk. Has no role in classical nuclear localization signal (cNLS)-dependent nuclear import via importin-beta. Functionally, a component of the GATOR subcomplex GATOR2 which functions as an activator of the amino acid-sensing branch of the mTORC1 signaling pathway. The two GATOR subcomplexes, GATOR1 and GATOR2, regulate the mTORC1 pathway in order to mediate metabolic homeostasis, female gametogenesis and the response to amino acid limitation and complete starvation. GATOR2 activates the mTORC1 signaling pathway through the inhibition of the GATOR1 subcomplex, controlling the switch to cell proliferation and growth under nutrient replete conditions and during female oocyte development. The protein is Protein SEC13 homolog of Drosophila melanogaster (Fruit fly).